Consider the following 119-residue polypeptide: Myohemerythrin-1 (119 aa).

Residues H25, H55, N58, E59, H74, H78, H107, and D112 each contribute to the Fe cation site.

This sequence belongs to the hemerythrin family. As to quaternary structure, monomer. In terms of tissue distribution, muscle.

Myohemerythrin is an oxygen-binding protein found in the retractor muscles of certain worms. The oxygen-binding site contains two iron atoms. This Phascolopsis gouldii (Peanut worm) protein is Myohemerythrin-1.